Consider the following 401-residue polypeptide: Tyrosine--tRNA ligase (401 aa).

The 'HIGH' region motif lies at 45–54 (PTAPDLHLGH). The short motif at 230–234 (KMSKS) is the 'KMSKS' region element. Lys233 serves as a coordination point for ATP. One can recognise an S4 RNA-binding domain in the interval 339–399 (IWLAKALVEC…GKRKFAKLKV (61 aa)).

This sequence belongs to the class-I aminoacyl-tRNA synthetase family. TyrS type 2 subfamily. In terms of assembly, homodimer.

Its subcellular location is the cytoplasm. The catalysed reaction is tRNA(Tyr) + L-tyrosine + ATP = L-tyrosyl-tRNA(Tyr) + AMP + diphosphate + H(+). Functionally, catalyzes the attachment of tyrosine to tRNA(Tyr) in a two-step reaction: tyrosine is first activated by ATP to form Tyr-AMP and then transferred to the acceptor end of tRNA(Tyr). The sequence is that of Tyrosine--tRNA ligase from Campylobacter jejuni (strain RM1221).